The primary structure comprises 401 residues: Voltage-gated potassium channel subunit beta-1 (401 aa).

Residues threonine 90, tryptophan 91, glutamine 97, and aspartate 119 each coordinate NADP(+). Residue tyrosine 124 is the Proton donor/acceptor of the active site. 17 residues coordinate NADP(+): asparagine 192, serine 222, arginine 223, glutamine 248, tryptophan 277, serine 278, proline 279, leucine 280, alanine 281, cysteine 282, lysine 288, arginine 298, glycine 357, serine 359, glutamine 363, glutamate 366, and asparagine 367.

It belongs to the shaker potassium channel beta subunit family. As to quaternary structure, homotetramer. Interaction with tetrameric potassium channel alpha subunits gives rise to a heterooctamer.

The protein localises to the cytoplasm. The protein resides in the membrane. It is found in the cell membrane. The enzyme catalyses a primary alcohol + NADP(+) = an aldehyde + NADPH + H(+). The catalysed reaction is a secondary alcohol + NADP(+) = a ketone + NADPH + H(+). Its function is as follows. Regulatory subunit of the voltage-gated potassium (Kv) channels composed of pore-forming and potassium-conducting alpha subunits and of regulatory beta subunits. The beta-1/KCNAB1 cytoplasmic subunit mediates closure of delayed rectifier potassium channels by physically obstructing the pore via its N-terminal domain and increases the speed of channel closure for other family members. Promotes the inactivation of KCNA1, KCNA2, KCNA4, KCNA5 and KCNA6 alpha subunit-containing channels. Displays nicotinamide adenine dinucleotide phosphate (NADPH)-dependent aldoketoreductase activity by catalyzing the NADPH-dependent reduction of a variety of endogenous aldehydes and ketones. The binding of NADPH is required for efficient down-regulation of potassium channel activity. Oxidation of the bound NADPH restrains N-terminal domain from blocking the channel, thereby decreasing N-type inactivation of potassium channel activity. The chain is Voltage-gated potassium channel subunit beta-1 (KCNAB1) from Gallus gallus (Chicken).